The sequence spans 460 residues: Angiopoietin-related protein 3 (460 aa).

The signal sequence occupies residues methionine 1–serine 16. The segment at serine 17 to lysine 165 is sufficient to inhibit LPL lipase activity. Residues serine 17–serine 207 are sufficient to inhibit LIPG/EL phospholipase activity. Residues glutamate 32–glycine 56 form a required for inhibition of LPL lipase activity region. Residues leucine 85–glutamate 210 adopt a coiled-coil conformation. Asparagine 115 is a glycosylation site (N-linked (GlcNAc...) asparagine). A glycan (O-linked (GalNAc) threonine) is linked at threonine 226. Residues valine 237–aspartate 455 form the Fibrinogen C-terminal domain. Residues cysteine 246 and cysteine 274 are joined by a disulfide bond. N-linked (GlcNAc...) asparagine glycans are attached at residues asparagine 296 and asparagine 357. Cysteine 394 and cysteine 408 are disulfide-bonded.

As to quaternary structure, interacts with ANGPTL8. Interacts with ITGB3. In terms of processing, O-glycosylated at Thr-226 by GALNT2; blocks processing and activation by proprotein convertases. In part proteolytically cleaved by proprotein convertases; proposed to be involved in activation. In terms of tissue distribution, expressed principally in liver. Weakly expressed in kidney. Binds to adipocytes. Increased expression and colocalization with activated ITGB3 in glomeruli of patients with nephrotic syndrome showing effaced podocyte foot processes (at protein level).

The protein resides in the secreted. The protein localises to the cell projection. It is found in the lamellipodium. Acts in part as a hepatokine that is involved in regulation of lipid and glucose metabolism. Proposed to play a role in the trafficking of energy substrates to either storage or oxidative tissues in response to food intake. Has a stimulatory effect on plasma triglycerides (TG), which is achieved by suppressing plasma TG clearance via inhibition of LPL activity. The inhibition of LPL activity appears to be an indirect mechanism involving recruitment of proprotein convertases PCSK6 and FURIN to LPL leading to cleavage and dissociation of LPL from the cell surface; the function does not require ANGPTL3 proteolytic cleavage but seems to be mediated by the N-terminal domain, and is not inhibited by GPIHBP1. Can inhibit endothelial lipase, causing increased plasma levels of high density lipoprotein (HDL) cholesterol and phospholipids. Can bind to adipocytes to activate lipolysis, releasing free fatty acids and glycerol. Suppresses LPL specifically in oxidative tissues which is required to route very low density lipoprotein (VLDL)-TG to white adipose tissue (WAT) for storage in response to food; the function may involve cooperation with circulating, liver-derived ANGPTL8 and ANGPTL4 expression in WAT. Contributes to lower plasma levels of low density lipoprotein (LDL)-cholesterol by a mechanism that is independent of the canonical pathway implicating APOE and LDLR. May stimulate hypothalamic LPL activity. Functionally, in vitro inhibits LPL activity; not effective on GPIHBP1-stabilized LPL. Its function is as follows. Involved in angiogenesis. Binds to endothelial cells via integrin alpha-V/beta-3 (ITGAV:ITGB3), activates FAK, MAPK and Akt signaling pathways and induces cell adhesion and cell migration. Secreted from podocytes, may modulate properties of glomerular endothelial cells involving integrin alpha-V/beta-3 and Akt signaling. May increase the motility of podocytes. May induce actin filament rearrangements in podocytes implicating integrin alpha-V/beta-3 and Rac1 activation. Binds to hematopoietic stem cells (HSC) and is involved in the regulation of HSC activity probably implicating down-regulation of IKZF1/IKAROS. The chain is Angiopoietin-related protein 3 (ANGPTL3) from Homo sapiens (Human).